We begin with the raw amino-acid sequence, 391 residues long: Autophagy-related protein 18d (391 aa).

Residues 1–24 form a disordered region; sequence MDPRRNFQPGGYDSRNTFTSGSFG. WD repeat units lie at residues 31-69, 74-118, 203-243, and 248-287; these read SDEA…ETFR, DGGF…CISE, AHDS…RLQE, and VDRA…IGED.

The protein belongs to the WD repeat PROPPIN family. In terms of assembly, component of the PI(3,5)P2 regulatory complex at least composed of ATG18, SAC/FIG4, FAB1 and VAC14. In terms of tissue distribution, expressed in roots, stems, flowers and leaves.

It is found in the preautophagosomal structure membrane. The protein localises to the vacuole membrane. The PI(3,5)P2 regulatory complex regulates both the synthesis and turnover of phosphatidylinositol 3,5-bisphosphate (PtdIns(3,5)P2). Required for autophagy. This Arabidopsis thaliana (Mouse-ear cress) protein is Autophagy-related protein 18d (ATG18D).